A 457-amino-acid polypeptide reads, in one-letter code: Bifunctional protein GlmU (457 aa).

The segment at 1–230 (MSKRYAVVLA…FEESLGVNDR (230 aa)) is pyrophosphorylase. Residues 9 to 12 (LAAG), Lys-23, Gln-73, and 78 to 79 (GT) each bind UDP-N-acetyl-alpha-D-glucosamine. Asp-103 contacts Mg(2+). Residues Gly-140, Glu-155, Asn-170, and Asn-228 each contribute to the UDP-N-acetyl-alpha-D-glucosamine site. Asn-228 is a Mg(2+) binding site. The segment at 231 to 251 (IALAEASKLMQRRINENHMRN) is linker. An N-acetyltransferase region spans residues 252–457 (GVTLVNPEST…GYAKHLNHSK (206 aa)). Arg-333 and Lys-351 together coordinate UDP-N-acetyl-alpha-D-glucosamine. The active-site Proton acceptor is His-363. 2 residues coordinate UDP-N-acetyl-alpha-D-glucosamine: Tyr-366 and Asn-377. Acetyl-CoA-binding positions include 386-387 (NY), Ala-423, and Arg-440.

This sequence in the N-terminal section; belongs to the N-acetylglucosamine-1-phosphate uridyltransferase family. The protein in the C-terminal section; belongs to the transferase hexapeptide repeat family. In terms of assembly, homotrimer. The cofactor is Mg(2+).

The protein localises to the cytoplasm. The catalysed reaction is alpha-D-glucosamine 1-phosphate + acetyl-CoA = N-acetyl-alpha-D-glucosamine 1-phosphate + CoA + H(+). It carries out the reaction N-acetyl-alpha-D-glucosamine 1-phosphate + UTP + H(+) = UDP-N-acetyl-alpha-D-glucosamine + diphosphate. It participates in nucleotide-sugar biosynthesis; UDP-N-acetyl-alpha-D-glucosamine biosynthesis; N-acetyl-alpha-D-glucosamine 1-phosphate from alpha-D-glucosamine 6-phosphate (route II): step 2/2. The protein operates within nucleotide-sugar biosynthesis; UDP-N-acetyl-alpha-D-glucosamine biosynthesis; UDP-N-acetyl-alpha-D-glucosamine from N-acetyl-alpha-D-glucosamine 1-phosphate: step 1/1. Its pathway is bacterial outer membrane biogenesis; LPS lipid A biosynthesis. Functionally, catalyzes the last two sequential reactions in the de novo biosynthetic pathway for UDP-N-acetylglucosamine (UDP-GlcNAc). The C-terminal domain catalyzes the transfer of acetyl group from acetyl coenzyme A to glucosamine-1-phosphate (GlcN-1-P) to produce N-acetylglucosamine-1-phosphate (GlcNAc-1-P), which is converted into UDP-GlcNAc by the transfer of uridine 5-monophosphate (from uridine 5-triphosphate), a reaction catalyzed by the N-terminal domain. The chain is Bifunctional protein GlmU from Listeria monocytogenes serovar 1/2a (strain ATCC BAA-679 / EGD-e).